The following is a 228-amino-acid chain: Orotate phosphoribosyltransferase (228 aa).

Lys26 serves as a coordination point for 5-phospho-alpha-D-ribose 1-diphosphate. 34 to 35 (FF) provides a ligand contact to orotate. 5-phospho-alpha-D-ribose 1-diphosphate-binding positions include 72-73 (YK), Arg98, Lys99, Lys102, His104, and 123-131 (DDVISAGTS). Orotate is bound by residues Ser127 and Arg155.

The protein belongs to the purine/pyrimidine phosphoribosyltransferase family. PyrE subfamily. Homodimer. The cofactor is Mg(2+).

The catalysed reaction is orotidine 5'-phosphate + diphosphate = orotate + 5-phospho-alpha-D-ribose 1-diphosphate. Its pathway is pyrimidine metabolism; UMP biosynthesis via de novo pathway; UMP from orotate: step 1/2. Its function is as follows. Catalyzes the transfer of a ribosyl phosphate group from 5-phosphoribose 1-diphosphate to orotate, leading to the formation of orotidine monophosphate (OMP). In Nitrosospira multiformis (strain ATCC 25196 / NCIMB 11849 / C 71), this protein is Orotate phosphoribosyltransferase.